A 222-amino-acid chain; its full sequence is Probable transaldolase (222 aa).

K91 acts as the Schiff-base intermediate with substrate in catalysis.

This sequence belongs to the transaldolase family. Type 3B subfamily.

Its subcellular location is the cytoplasm. The catalysed reaction is D-sedoheptulose 7-phosphate + D-glyceraldehyde 3-phosphate = D-erythrose 4-phosphate + beta-D-fructose 6-phosphate. It participates in carbohydrate degradation; pentose phosphate pathway; D-glyceraldehyde 3-phosphate and beta-D-fructose 6-phosphate from D-ribose 5-phosphate and D-xylulose 5-phosphate (non-oxidative stage): step 2/3. Its function is as follows. Transaldolase is important for the balance of metabolites in the pentose-phosphate pathway. The polypeptide is Probable transaldolase (Chlorobium chlorochromatii (strain CaD3)).